The sequence spans 384 residues: S-adenosylmethionine synthase (384 aa).

Histidine 15 lines the ATP pocket. Position 17 (aspartate 17) interacts with Mg(2+). Glutamate 43 contributes to the K(+) binding site. Positions 56 and 99 each coordinate L-methionine. Residues 99-109 (QSPDINQGVDR) are flexible loop. ATP is bound by residues 164-166 (DAK), 230-231 (RF), aspartate 239, 245-246 (RK), alanine 262, and lysine 266. Aspartate 239 contributes to the L-methionine binding site. Lysine 270 is an L-methionine binding site.

It belongs to the AdoMet synthase family. In terms of assembly, homotetramer; dimer of dimers. Mg(2+) is required as a cofactor. Requires K(+) as cofactor.

The protein resides in the cytoplasm. The catalysed reaction is L-methionine + ATP + H2O = S-adenosyl-L-methionine + phosphate + diphosphate. It functions in the pathway amino-acid biosynthesis; S-adenosyl-L-methionine biosynthesis; S-adenosyl-L-methionine from L-methionine: step 1/1. Its function is as follows. Catalyzes the formation of S-adenosylmethionine (AdoMet) from methionine and ATP. The overall synthetic reaction is composed of two sequential steps, AdoMet formation and the subsequent tripolyphosphate hydrolysis which occurs prior to release of AdoMet from the enzyme. In Citrobacter koseri (strain ATCC BAA-895 / CDC 4225-83 / SGSC4696), this protein is S-adenosylmethionine synthase.